We begin with the raw amino-acid sequence, 302 residues long: Methionyl-tRNA formyltransferase (302 aa).

Residue 107 to 110 (SLLP) coordinates (6S)-5,6,7,8-tetrahydrofolate.

This sequence belongs to the Fmt family.

It catalyses the reaction L-methionyl-tRNA(fMet) + (6R)-10-formyltetrahydrofolate = N-formyl-L-methionyl-tRNA(fMet) + (6S)-5,6,7,8-tetrahydrofolate + H(+). In terms of biological role, attaches a formyl group to the free amino group of methionyl-tRNA(fMet). The formyl group appears to play a dual role in the initiator identity of N-formylmethionyl-tRNA by promoting its recognition by IF2 and preventing the misappropriation of this tRNA by the elongation apparatus. This Leifsonia xyli subsp. xyli (strain CTCB07) protein is Methionyl-tRNA formyltransferase.